The chain runs to 332 residues: Cell growth regulator with RING finger domain protein 1 (332 aa).

The RING-type zinc-finger motif lies at cysteine 274–arginine 309.

Ubiquitously expressed with high expression in testis and the cerebellum.

Its subcellular location is the nucleus. The protein localises to the endoplasmic reticulum. In terms of biological role, able to inhibit growth in several cell lines. The polypeptide is Cell growth regulator with RING finger domain protein 1 (CGRRF1) (Homo sapiens (Human)).